Reading from the N-terminus, the 344-residue chain is tRNA N6-adenosine threonylcarbamoyltransferase (344 aa).

The Fe cation site is built by H110 and H114. Substrate contacts are provided by residues 132–136 (LVSGG), D166, G179, D183, and N278. D306 contributes to the Fe cation binding site.

This sequence belongs to the KAE1 / TsaD family. Fe(2+) is required as a cofactor.

Its subcellular location is the cytoplasm. It catalyses the reaction L-threonylcarbamoyladenylate + adenosine(37) in tRNA = N(6)-L-threonylcarbamoyladenosine(37) in tRNA + AMP + H(+). Required for the formation of a threonylcarbamoyl group on adenosine at position 37 (t(6)A37) in tRNAs that read codons beginning with adenine. Is involved in the transfer of the threonylcarbamoyl moiety of threonylcarbamoyl-AMP (TC-AMP) to the N6 group of A37, together with TsaE and TsaB. TsaD likely plays a direct catalytic role in this reaction. The sequence is that of tRNA N6-adenosine threonylcarbamoyltransferase from Nocardia farcinica (strain IFM 10152).